Reading from the N-terminus, the 898-residue chain is Aconitate hydratase 1 (898 aa).

The residue at position 2 (Ala2) is an N-acetylalanine. Substrate contacts are provided by residues Gln90 and 209–211 (DSH). Residues Cys441, Cys507, and Cys510 each contribute to the [4Fe-4S] cluster site. Substrate-binding positions include Arg540, Arg545, Arg703, and 784-785 (SR).

Belongs to the aconitase/IPM isomerase family. Monomer. The cofactor is [4Fe-4S] cluster. In terms of tissue distribution, mostly expressed in roots, stems and leaves, also present in stems and flowers.

Its subcellular location is the cytoplasm. The protein localises to the mitochondrion. It carries out the reaction citrate = D-threo-isocitrate. The protein operates within carbohydrate metabolism; tricarboxylic acid cycle; isocitrate from oxaloacetate: step 2/2. In terms of biological role, catalyzes the isomerization of citrate to isocitrate via cis-aconitate. Contributes to oxidative stress tolerance. May have a role in respiration. The sequence is that of Aconitate hydratase 1 from Arabidopsis thaliana (Mouse-ear cress).